The chain runs to 452 residues: uncharacterized protein (452 aa).

A disordered region spans residues 1–452; it reads MTAVSSNRNP…LRKPEADTAL (452 aa). 4 stretches are compositionally biased toward polar residues: residues 29–41, 95–111, 129–144, and 163–176; these read RTGT…VSSN, SPQT…SNRN, SPQT…SSNR, and SPQT…AVSS. Basic and acidic residues predominate over residues 177–193; sequence NRDHEDDGCLLKQESRG. Composition is skewed to polar residues over residues 197–212, 231–245, 265–280, 299–314, 333–347, 376–394, and 412–426; these read SPQT…SSNR, SPQT…VSSN, SPQT…VSSK, and TAVS…SNRN. Positions 439-452 are enriched in basic and acidic residues; it reads EPQELRKPEADTAL.

This is an uncharacterized protein from Homo sapiens (Human).